Here is a 303-residue protein sequence, read N- to C-terminus: RELT-like protein 2 (303 aa).

The helical transmembrane segment at 15 to 35 threads the bilayer; the sequence is LYMLFLLVLVFFLMGLVGFMI. Disordered regions lie at residues 47-68, 135-214, and 249-303; these read RTSR…DDVN, CSRS…QPRT, and PCTL…AGGM. S52 is subject to Phosphoserine. Composition is skewed to basic and acidic residues over residues 148–158 and 172–188; these read RSKEGKSRPRP and THIE…DGSP. The span at 194–212 shows a compositional bias: gly residues; that stretch reads GSGGGQEPGGSQAAGGGQP. Residues 274–295 show a composition bias toward polar residues; the sequence is GLSSQEANGQPTKLDTSGQQES.

Belongs to the RELT family. In terms of assembly, interacts with RELT, RELL1, OXSR1, PLSCR1 and TRAF2.

Its subcellular location is the cell membrane. Induces activation of MAPK14/p38 cascade, when overexpressed. Induces apoptosis, when overexpressed. This chain is RELT-like protein 2 (Rell2), found in Mus musculus (Mouse).